Consider the following 462-residue polypeptide: Squalene synthase LSS (462 aa).

Positions 48 and 73 each coordinate NADP(+). The Mg(2+) site is built by D76, E79, and D80. 3 residues coordinate NADP(+): R214, K314, and R316. 2 helical membrane passes run 399 to 419 (LVLVLGLGYCVYAFNLLPLLW) and 436 to 456 (LGLPHQIIAVFCVLTAGYQVF).

This sequence belongs to the phytoene/squalene synthase family. Mg(2+) serves as cofactor.

It is found in the membrane. The catalysed reaction is 2 (2E,6E)-farnesyl diphosphate + NADH + H(+) = squalene + 2 diphosphate + NAD(+). It carries out the reaction 2 (2E,6E)-farnesyl diphosphate + NADPH + H(+) = squalene + 2 diphosphate + NADP(+). In terms of biological role, converts farnesyl diphosphate (FPP) into squalene, a precursor for sterol biosynthesis in eukaryotes. The chain is Squalene synthase LSS from Botryococcus braunii (Green alga).